A 350-amino-acid chain; its full sequence is Methionine import ATP-binding protein MetN (350 aa).

Residues 9–245 (LKDVDVEFHG…PQQQLTKDFI (237 aa)) form the ABC transporter domain. 43–50 (GYSGAGKS) serves as a coordination point for ATP.

This sequence belongs to the ABC transporter superfamily. Methionine importer (TC 3.A.1.24) family. In terms of assembly, the complex is composed of two ATP-binding proteins (MetN), two transmembrane proteins (MetI) and a solute-binding protein (MetQ).

It is found in the cell membrane. It carries out the reaction L-methionine(out) + ATP + H2O = L-methionine(in) + ADP + phosphate + H(+). The enzyme catalyses D-methionine(out) + ATP + H2O = D-methionine(in) + ADP + phosphate + H(+). Its function is as follows. Part of the ABC transporter complex MetNIQ involved in methionine import. Responsible for energy coupling to the transport system. In Lacticaseibacillus paracasei (strain ATCC 334 / BCRC 17002 / CCUG 31169 / CIP 107868 / KCTC 3260 / NRRL B-441) (Lactobacillus paracasei), this protein is Methionine import ATP-binding protein MetN.